The primary structure comprises 370 residues: Putative L-lysine 2,3-aminomutase aq_454 (370 aa).

One can recognise a Radical SAM core domain in the interval 107-322 (HRYPDRVLLN…RGRLSGFGIP (216 aa)). [4Fe-4S] cluster is bound by residues C121, C125, and C128. K334 carries the post-translational modification N6-(pyridoxal phosphate)lysine.

It belongs to the radical SAM superfamily. KamA family. [4Fe-4S] cluster serves as cofactor. Requires pyridoxal 5'-phosphate as cofactor.

The chain is Putative L-lysine 2,3-aminomutase aq_454 from Aquifex aeolicus (strain VF5).